A 20-amino-acid chain; its full sequence is Major extrapallial fluid protein (20 aa).

The segment at 1–20 (NPVDDHHDDHHDAPIVEHHD) is disordered.

As to quaternary structure, homodimer. In terms of processing, glycosylated.

Functionally, appears to be a building block of the soluble organic matrix of the shell. The protein binds calcium. This Mytilus edulis (Blue mussel) protein is Major extrapallial fluid protein.